The following is a 738-amino-acid chain: Protein Aster-B (738 aa).

The segment at 1-81 (MKGFKLSCTA…SGGKNSKKSQ (81 aa)) is disordered. Positions 8-19 (CTASNSNRSTPA) are enriched in polar residues. Residues Ser-28 and Ser-30 each carry the phosphoserine modification. The segment covering 41 to 51 (MVEKGSDHSSD) has biased composition (basic and acidic residues). A compositionally biased stretch (low complexity) spans 59–70 (QGVQRSCSSQSG). The GRAM domain maps to 96–163 (EDFRKLFKQL…KDICSMTKEK (68 aa)). Residues 254-301 (EENEVNDSSSKSSIETKPDASPQLPKKSITNSTLTSTGSSEAPVSFDG) are disordered. Polar residues predominate over residues 259-268 (NDSSSKSSIE). The residue at position 274 (Ser-274) is a Phosphoserine. Over residues 281–295 (SITNSTLTSTGSSEA) the composition is skewed to polar residues. The region spanning 372–543 (SGRQYVNEVF…ELAKTESTYL (172 aa)) is the VASt domain. Position 389 is a phosphotyrosine (Tyr-389). A disordered region spans residues 544–566 (AEMHRQSPKEKASKTTTVRRRKR). Residues 545-556 (EMHRQSPKEKAS) show a composition bias toward basic and acidic residues. Phosphoserine occurs at positions 550 and 581. 3 positions are modified to phosphothreonine: Thr-584, Thr-585, and Thr-587. Residues 623-643 (LLLVISCVICFSLVLLVILNM) form a helical membrane-spanning segment.

The protein resides in the endoplasmic reticulum membrane. It is found in the cell membrane. Its function is as follows. Cholesterol transporter that mediates non-vesicular transport of cholesterol from the plasma membrane (PM) to the endoplasmic reticulum (ER). Contains unique domains for binding cholesterol and the PM, thereby serving as a molecular bridge for the transfer of cholesterol from the PM to the ER. Plays a crucial role in cholesterol homeostasis in the adrenal gland and has the unique ability to localize to the PM based on the level of membrane cholesterol. In lipid-poor conditions localizes to the ER membrane and in response to excess cholesterol in the PM is recruited to the endoplasmic reticulum-plasma membrane contact sites (EPCS) which is mediated by the GRAM domain. At the EPCS, the sterol-binding VASt/ASTER domain binds to the cholesterol in the PM and facilitates its transfer from the PM to ER. This is Protein Aster-B (GRAMD1B) from Homo sapiens (Human).